We begin with the raw amino-acid sequence, 308 residues long: Membrane protein insertase YidC 1 (308 aa).

Positions 1-22 (MKSIKRFALSAMGVAMLLVLTG) are cleaved as a signal peptide. Cys-23 carries N-palmitoyl cysteine lipidation. A lipid anchor (S-diacylglycerol cysteine) is attached at Cys-23. The next 5 helical transmembrane spans lie at 60 to 80 (FGVA…PLGI), 135 to 155 (FGGV…AIYF), 168 to 188 (YLGI…GVLY), 211 to 226 (MIYM…SLFS), and 232 to 252 (LYWV…NYIV). The interval 263-308 (ELAKNPPKASAFSKPSGRKDVTPEQPTAITSKKKHKNRNAGKQRSR) is disordered. A compositionally biased stretch (basic residues) spans 293 to 308 (SKKKHKNRNAGKQRSR).

The protein belongs to the OXA1/ALB3/YidC family. Type 2 subfamily.

The protein resides in the cell membrane. Its function is as follows. Required for the insertion and/or proper folding and/or complex formation of integral membrane proteins into the membrane. Involved in integration of membrane proteins that insert both dependently and independently of the Sec translocase complex, as well as at least some lipoproteins. This Streptococcus pneumoniae serotype 4 (strain ATCC BAA-334 / TIGR4) protein is Membrane protein insertase YidC 1.